The sequence spans 138 residues: Cysteine desulfuration protein SufE (138 aa).

The active-site Cysteine persulfide intermediate is Cys51.

Belongs to the SufE family. In terms of assembly, homodimer. Interacts with SufS.

The protein resides in the cytoplasm. It functions in the pathway cofactor biosynthesis; iron-sulfur cluster biosynthesis. Participates in cysteine desulfuration mediated by SufS. Cysteine desulfuration mobilizes sulfur from L-cysteine to yield L-alanine and constitutes an essential step in sulfur metabolism for biosynthesis of a variety of sulfur-containing biomolecules. Functions as a sulfur acceptor for SufS, by mediating the direct transfer of the sulfur atom from the S-sulfanylcysteine of SufS, an intermediate product of cysteine desulfuration process. In Shigella sonnei (strain Ss046), this protein is Cysteine desulfuration protein SufE.